A 53-amino-acid chain; its full sequence is UPF0391 membrane protein YPTS_0599 (53 aa).

The next 2 membrane-spanning stretches (helical) occupy residues 4–24 (WGII…GGLA) and 27–47 (AAWA…ISLF).

Belongs to the UPF0391 family.

It is found in the cell membrane. In Yersinia pseudotuberculosis serotype IB (strain PB1/+), this protein is UPF0391 membrane protein YPTS_0599.